Reading from the N-terminus, the 111-residue chain is MVNVPKTRRTFCKKCGKHQPHKVTQYKKGKDSLYAQGKRRYDRKQSGYGGQTKPIFRKKAKTTKKIVLRLECVEPNCRSKRMLAIKRCKHFELGGDKKRKVCYAWKVQPCL.

4 residues coordinate Zn(2+): Cys-12, Cys-15, Cys-72, and Cys-77.

This sequence belongs to the eukaryotic ribosomal protein eL42 family. Component of the large ribosomal subunit.

It is found in the cytoplasm. Component of the large ribosomal subunit. The ribosome is a large ribonucleoprotein complex responsible for the synthesis of proteins in the cell. This Oryctolagus cuniculus (Rabbit) protein is Large ribosomal subunit protein eL42 (RPL36A).